The following is a 433-amino-acid chain: UDP-N-acetylglucosamine 1-carboxyvinyltransferase (433 aa).

Residue 34–35 coordinates phosphoenolpyruvate; that stretch reads KN. Arg-104 contacts UDP-N-acetyl-alpha-D-glucosamine. Cys-128 serves as the catalytic Proton donor. The residue at position 128 (Cys-128) is a 2-(S-cysteinyl)pyruvic acid O-phosphothioketal. The UDP-N-acetyl-alpha-D-glucosamine site is built by Asp-320 and Ile-342.

This sequence belongs to the EPSP synthase family. MurA subfamily.

Its subcellular location is the cytoplasm. It carries out the reaction phosphoenolpyruvate + UDP-N-acetyl-alpha-D-glucosamine = UDP-N-acetyl-3-O-(1-carboxyvinyl)-alpha-D-glucosamine + phosphate. It participates in cell wall biogenesis; peptidoglycan biosynthesis. Its function is as follows. Cell wall formation. Adds enolpyruvyl to UDP-N-acetylglucosamine. The protein is UDP-N-acetylglucosamine 1-carboxyvinyltransferase of Parasynechococcus marenigrum (strain WH8102).